A 183-amino-acid polypeptide reads, in one-letter code: Peptidyl-tRNA hydrolase (183 aa).

Tyr15 serves as a coordination point for tRNA. His20 functions as the Proton acceptor in the catalytic mechanism. The tRNA site is built by Tyr67 and Asn69.

Belongs to the PTH family. Monomer.

The protein localises to the cytoplasm. It carries out the reaction an N-acyl-L-alpha-aminoacyl-tRNA + H2O = an N-acyl-L-amino acid + a tRNA + H(+). In terms of biological role, hydrolyzes ribosome-free peptidyl-tRNAs (with 1 or more amino acids incorporated), which drop off the ribosome during protein synthesis, or as a result of ribosome stalling. Functionally, catalyzes the release of premature peptidyl moieties from peptidyl-tRNA molecules trapped in stalled 50S ribosomal subunits, and thus maintains levels of free tRNAs and 50S ribosomes. This chain is Peptidyl-tRNA hydrolase, found in Chlamydia abortus (strain DSM 27085 / S26/3) (Chlamydophila abortus).